The sequence spans 539 residues: Chaperonin GroEL (539 aa).

ATP is bound by residues 29–32 (TLGP), 86–90 (DGTTT), Gly413, 476–478 (NAA), and Asp492.

It belongs to the chaperonin (HSP60) family. As to quaternary structure, forms a cylinder of 14 subunits composed of two heptameric rings stacked back-to-back. Interacts with the co-chaperonin GroES.

The protein resides in the cytoplasm. The enzyme catalyses ATP + H2O + a folded polypeptide = ADP + phosphate + an unfolded polypeptide.. Functionally, together with its co-chaperonin GroES, plays an essential role in assisting protein folding. The GroEL-GroES system forms a nano-cage that allows encapsulation of the non-native substrate proteins and provides a physical environment optimized to promote and accelerate protein folding. The sequence is that of Chaperonin GroEL from Macrococcus caseolyticus (strain JCSC5402) (Macrococcoides caseolyticum).